The primary structure comprises 426 residues: Multifunctional protein ADE2 (426 aa).

Positions 1-261 (MAPAASELKL…WVAERVELLL (261 aa)) are SAICAR synthetase. The AIR carboxylase stretch occupies residues 262 to 426 (KTKSQGRVVV…ADKKLRECTL (165 aa)).

This sequence in the N-terminal section; belongs to the SAICAR synthetase family. The protein in the C-terminal section; belongs to the AIR carboxylase family. Class II subfamily. As to quaternary structure, homooctamer.

The enzyme catalyses 5-amino-1-(5-phospho-D-ribosyl)imidazole-4-carboxylate + L-aspartate + ATP = (2S)-2-[5-amino-1-(5-phospho-beta-D-ribosyl)imidazole-4-carboxamido]succinate + ADP + phosphate + 2 H(+). It carries out the reaction 5-amino-1-(5-phospho-D-ribosyl)imidazole-4-carboxylate + H(+) = 5-amino-1-(5-phospho-beta-D-ribosyl)imidazole + CO2. It participates in purine metabolism; IMP biosynthesis via de novo pathway; 5-amino-1-(5-phospho-D-ribosyl)imidazole-4-carboxamide from 5-amino-1-(5-phospho-D-ribosyl)imidazole-4-carboxylate: step 1/2. Its pathway is purine metabolism; IMP biosynthesis via de novo pathway; 5-amino-1-(5-phospho-D-ribosyl)imidazole-4-carboxylate from 5-amino-1-(5-phospho-D-ribosyl)imidazole (carboxylase route): step 1/1. The sequence is that of Multifunctional protein ADE2 (AIRC) from Gallus gallus (Chicken).